Consider the following 384-residue polypeptide: Beta-ureidopropionase (384 aa).

The 273-residue stretch at 72–344 (VHVGLVQNRI…DGLLVAKLDL (273 aa)) folds into the CN hydrolase domain. Glu-119 (proton acceptor) is an active-site residue. Catalysis depends on Lys-196, which acts as the Proton donor. The active-site Nucleophile is Cys-233. Phosphoserine is present on Ser-378.

The protein belongs to the carbon-nitrogen hydrolase superfamily. BUP family. As to quaternary structure, homodimer, homotetramer, homooctamer; can also form higher homooligomers. In terms of tissue distribution, detected in liver (at protein level).

The protein localises to the cytoplasm. It carries out the reaction 3-(carbamoylamino)propanoate + H2O + 2 H(+) = beta-alanine + NH4(+) + CO2. It catalyses the reaction 3-(carbamoylamino)-2-methylpropanoate + H2O + 2 H(+) = (R)-3-amino-2-methylpropanoate + NH4(+) + CO2. The protein operates within amino-acid biosynthesis; beta-alanine biosynthesis. With respect to regulation, strongly inhibited by 50 mM Zn(2+). Not inhibited by EDTA. Competitively inhibited by beta-alanine, 5-aminolevulinic acid (ALA), beta-aminoisobutyrate and 4-ureidobutyrate. In terms of biological role, catalyzes a late step in pyrimidine degradation. Converts N-carbamoyl-beta-alanine (3-ureidopropanoate) into beta-alanine, ammonia and carbon dioxide. Likewise, converts N-carbamoyl-beta-aminoisobutyrate (3-ureidoisobutyrate) into beta-aminoisobutyrate, ammonia and carbon dioxide. In Homo sapiens (Human), this protein is Beta-ureidopropionase (UPB1).